The chain runs to 302 residues: MTILFSMPVHPQPIIDSGHRFDASRHWPASLTLGFAAYPEADTRITRMNVARHYGPLRVQRAFYPEGRDGCCHVYLLHPPGGIASGDSLTIDVTVSENAHALLTTPAANKLYRADSNNVAWTQHTHLKVEDGATLEWLPQETLAFDGSRGEQTVIIDLAETAKCLGWEIIGLGRPASDLPYVSGMIEQRFQLSQKGRPLWLERQAIDPTHPRFLGKWGQGGATVHATLWAVGLSDPADTITELRDKIPANHNWAVTYRRGVLLLRYLGMERNEAWDLLQQAREILRPRLMDVKAVTPRIWLT.

This sequence belongs to the UreD family. In terms of assembly, ureD, UreF and UreG form a complex that acts as a GTP-hydrolysis-dependent molecular chaperone, activating the urease apoprotein by helping to assemble the nickel containing metallocenter of UreC. The UreE protein probably delivers the nickel.

It is found in the cytoplasm. Required for maturation of urease via the functional incorporation of the urease nickel metallocenter. This is Urease accessory protein UreD 1 from Psychrobacter cryohalolentis (strain ATCC BAA-1226 / DSM 17306 / VKM B-2378 / K5).